A 373-amino-acid chain; its full sequence is Anhydro-N-acetylmuramic acid kinase (373 aa).

13–20 (GTSMDGID) provides a ligand contact to ATP.

The protein belongs to the anhydro-N-acetylmuramic acid kinase family.

It carries out the reaction 1,6-anhydro-N-acetyl-beta-muramate + ATP + H2O = N-acetyl-D-muramate 6-phosphate + ADP + H(+). It functions in the pathway amino-sugar metabolism; 1,6-anhydro-N-acetylmuramate degradation. Its pathway is cell wall biogenesis; peptidoglycan recycling. Its function is as follows. Catalyzes the specific phosphorylation of 1,6-anhydro-N-acetylmuramic acid (anhMurNAc) with the simultaneous cleavage of the 1,6-anhydro ring, generating MurNAc-6-P. Is required for the utilization of anhMurNAc either imported from the medium or derived from its own cell wall murein, and thus plays a role in cell wall recycling. This chain is Anhydro-N-acetylmuramic acid kinase, found in Brucella suis (strain ATCC 23445 / NCTC 10510).